Consider the following 406-residue polypeptide: MNALINLKQSREYTTVTIDGQNHHIKLAGTMDDPYFCGKDVCSILRYKDVKQALQNKVKPKNKKMLSVLVKQDHNAVGVQTTSTRLGSNSPLTYNEGKAIYINEPGLYALIMHSNAPFAEEFQDLVYEQILPSIRKYGSYQLEMQLTQAMEQLSIKERDVQEAHEARIKAERKAVRVDKFMRRIAIKERKLEWIYIATTQQYAQERLFKIGSTSRLNTRIGHYNVGRPAEDSYYYCWVTKCYNSKDIDYHIQKLLVDFKHKNNAELYCSIKFSDLVAIVSFIVQHYDASIDYINSFIKTRLVASFDEEDGIPPAIDIRTSLANQGLVVDQDDIDVLIPQELNDSINEKVKQNLEEIVIERKELISKLADKTNISKKDLWTRIKDLTGWSSSKTVIINGDLNYKIIY.

The Bro-N domain maps to 4–138 (LINLKQSREY…QILPSIRKYG (135 aa)). Coiled-coil stretches lie at residues 141–177 (QLEMQLTQAMEQLSIKERDVQEAHEARIKAERKAVRV) and 343–372 (DSINEKVKQNLEEIVIERKELISKLADKTN).

This sequence belongs to the IIV-6 201R/289L family.

The protein is Putative Bro-N domain-containing protein 019R of Invertebrate iridescent virus 3 (IIV-3).